The chain runs to 208 residues: Uracil phosphoribosyltransferase (208 aa).

Residues Arg-78, Arg-103, and 130–138 (DPMLATANS) contribute to the 5-phospho-alpha-D-ribose 1-diphosphate site. Uracil-binding positions include Ile-193 and 198–200 (GDA). Residue Asp-199 coordinates 5-phospho-alpha-D-ribose 1-diphosphate.

It belongs to the UPRTase family. The cofactor is Mg(2+).

The catalysed reaction is UMP + diphosphate = 5-phospho-alpha-D-ribose 1-diphosphate + uracil. The protein operates within pyrimidine metabolism; UMP biosynthesis via salvage pathway; UMP from uracil: step 1/1. Its activity is regulated as follows. Allosterically activated by GTP. Catalyzes the conversion of uracil and 5-phospho-alpha-D-ribose 1-diphosphate (PRPP) to UMP and diphosphate. In Brucella melitensis biotype 2 (strain ATCC 23457), this protein is Uracil phosphoribosyltransferase.